The chain runs to 481 residues: Alginate biosynthesis protein AlgA (481 aa).

It belongs to the mannose-6-phosphate isomerase type 2 family. Monomer. Requires Co(2+) as cofactor.

It carries out the reaction D-mannose 6-phosphate = D-fructose 6-phosphate. The catalysed reaction is alpha-D-mannose 1-phosphate + GTP + H(+) = GDP-alpha-D-mannose + diphosphate. Its pathway is nucleotide-sugar biosynthesis; GDP-alpha-D-mannose biosynthesis; GDP-alpha-D-mannose from alpha-D-mannose 1-phosphate (GTP route): step 1/1. It functions in the pathway nucleotide-sugar biosynthesis; GDP-alpha-D-mannose biosynthesis; alpha-D-mannose 1-phosphate from D-fructose 6-phosphate: step 1/2. Functionally, produces a precursor for alginate polymerization. The alginate layer provides a protective barrier against host immune defenses and antibiotics. The protein is Alginate biosynthesis protein AlgA (algA) of Pseudomonas aeruginosa (strain ATCC 15692 / DSM 22644 / CIP 104116 / JCM 14847 / LMG 12228 / 1C / PRS 101 / PAO1).